Here is a 460-residue protein sequence, read N- to C-terminus: Ammonium transporter Rh type C (460 aa).

The Cytoplasmic segment spans residues 1–9; it reads MAWNTNLRW. The chain crosses the membrane as a helical span at residues 10 to 30; it reads RLPLTCLLLQVIMVILFGVFV. Residues 31–61 are Extracellular-facing; the sequence is RYDPDADAHWIDERLGRNISSDMDNEFYYRY. A glycan (N-linked (GlcNAc...) asparagine) is linked at Asn48. Residues 62-82 form a helical membrane-spanning segment; sequence PSFQDVHVMIFVGFGFLMTFL. At 83-86 the chain is on the cytoplasmic side; the sequence is QRYG. Residues 87–107 traverse the membrane as a helical segment; the sequence is FSSVGFNFLLAAFGIQWALLM. Residues 108–125 are Extracellular-facing; the sequence is QGWLHSFHSGYIVLGVEN. The chain crosses the membrane as a helical span at residues 126 to 145; that stretch reads LINADFCVGSVCVAFGAVLG. Residues 146-151 lie on the Cytoplasmic side of the membrane; that stretch reads KVSPVQ. A helical transmembrane segment spans residues 152 to 174; that stretch reads LLIMTLFQVTLFSVNEFILLNLL. Residues 175 to 179 lie on the Extracellular side of the membrane; the sequence is EVKDA. Residues 180–200 form a helical membrane-spanning segment; the sequence is GGSMTIHTFGAYFGLTVTWIL. Residues 201–219 are Cytoplasmic-facing; the sequence is YRPNLYQSKERQSSVYHSD. The chain crosses the membrane as a helical span at residues 220–240; the sequence is LFAMIGTLFLWMYWPSFNSAV. Topologically, residues 241 to 251 are extracellular; the sequence is SHHGDAQHRAA. The chain crosses the membrane as a helical span at residues 252-272; the sequence is INTYCSLAACVLTSVALSSAL. At 273–285 the chain is on the cytoplasmic side; sequence HKKGKLDMVHIQN. Residues 286 to 306 traverse the membrane as a helical segment; it reads ATLAGGVAVGTAAEMMLMPYG. Position 307 (Ser307) is a topological domain, extracellular. A helical membrane pass occupies residues 308-328; the sequence is LIVGFICGIISTLGFVYLTPF. The Cytoplasmic segment spans residues 329 to 340; sequence LESRLRIQDTCG. A helical transmembrane segment spans residues 341-361; that stretch reads IHNLHGMPGIIGGIVGAVTAA. Residues 362–396 lie on the Extracellular side of the membrane; sequence SANTQQYGQKGLAHAFDIDATKTTWTASMQGSFQA. Residues 397-417 form a helical membrane-spanning segment; sequence AGLFVSLAMALVGGLIVGVIL. Topologically, residues 418–460 are cytoplasmic; that stretch reads KLPFWGQPADENCFEDAIYWEIPEDQKSLVSRSEDPTLRPTEP.

Belongs to the ammonium transporter (TC 2.A.49) family. Rh subfamily. Homotrimer. In terms of processing, N-glycosylated.

Its subcellular location is the cell membrane. It localises to the apical cell membrane. It carries out the reaction NH4(+)(in) = NH4(+)(out). The catalysed reaction is methylamine(out) = methylamine(in). The enzyme catalyses CO2(out) = CO2(in). Functionally, ammonium transporter involved in the maintenance of acid-base homeostasis. Transports ammonium and its related derivative methylammonium across the plasma membrane of epithelial cells likely contributing to renal transepithelial ammonia transport and ammonia metabolism. Postulated to primarily mediate an electroneutral bidirectional transport of NH3 ammonia species according to a mechanism that implies interaction of an NH4(+) ion with acidic residues of the pore entry followed by dissociation of NH4(+) into NH3 and H(+). As a result NH3 transits through the central pore and is protonated on the extracellular side reforming NH4(+). May act as a CO2 channel providing for renal acid secretion. This chain is Ammonium transporter Rh type C (RHCG), found in Sus scrofa (Pig).